The following is a 182-amino-acid chain: Ribosome-recycling factor (182 aa).

A disordered region spans residues 136–160 (VKKSEKDGDLSEDQSRDEQEKIQKE).

It belongs to the RRF family.

It is found in the cytoplasm. Functionally, responsible for the release of ribosomes from messenger RNA at the termination of protein biosynthesis. May increase the efficiency of translation by recycling ribosomes from one round of translation to another. The polypeptide is Ribosome-recycling factor (Prochlorococcus marinus (strain NATL1A)).